The chain runs to 293 residues: Ribosomal protein L11 methyltransferase (293 aa).

Residues Thr-145, Gly-166, Asp-188, and Asn-230 each coordinate S-adenosyl-L-methionine.

This sequence belongs to the methyltransferase superfamily. PrmA family.

The protein resides in the cytoplasm. The enzyme catalyses L-lysyl-[protein] + 3 S-adenosyl-L-methionine = N(6),N(6),N(6)-trimethyl-L-lysyl-[protein] + 3 S-adenosyl-L-homocysteine + 3 H(+). Methylates ribosomal protein L11. This chain is Ribosomal protein L11 methyltransferase, found in Citrobacter koseri (strain ATCC BAA-895 / CDC 4225-83 / SGSC4696).